The primary structure comprises 150 residues: MNTQIEYKLLDARLAEQLPAYATPGAAGLDLRACIDLPLEIAPGQTTLIPTGIAIHIADPGLAAIILPRSGLGHKHGIVLGNLVGLIDSDYQGQLMVSCWNRGSVAYAVQPLERIAQLVIVPVVQAQFRQVDEFEASDRGVAGFGSTGRG.

Substrate-binding positions include arginine 69–glycine 71, asparagine 82, leucine 86–aspartate 88, and methionine 96.

The protein belongs to the dUTPase family. Requires Mg(2+) as cofactor.

The catalysed reaction is dUTP + H2O = dUMP + diphosphate + H(+). It functions in the pathway pyrimidine metabolism; dUMP biosynthesis; dUMP from dCTP (dUTP route): step 2/2. In terms of biological role, this enzyme is involved in nucleotide metabolism: it produces dUMP, the immediate precursor of thymidine nucleotides and it decreases the intracellular concentration of dUTP so that uracil cannot be incorporated into DNA. This Leptothrix cholodnii (strain ATCC 51168 / LMG 8142 / SP-6) (Leptothrix discophora (strain SP-6)) protein is Deoxyuridine 5'-triphosphate nucleotidohydrolase.